The chain runs to 1812 residues: Putative surface cell antigen sca2 (1812 aa).

The N-terminal stretch at 1 to 17 (MSTCLLTSSFLSTSARA) is a signal peptide. 2 stretches are compositionally biased toward polar residues: residues 344–357 (FLNN…STGR) and 371–382 (MSNQSIHNTGTS). 3 disordered regions span residues 344 to 382 (FLNN…TGTS), 648 to 691 (LEQT…QGFS), and 1338 to 1462 (KQEN…KKDV). A compositionally biased stretch (pro residues) spans 656–685 (PNPPPLPLNGGIPNPPPLPLNGSMPPPPPL). Basic and acidic residues-rich tracts occupy residues 1349–1367 (STKD…EQSD) and 1382–1393 (SKNDKSSDDKKS). Positions 1401-1416 (DEDDTGYATDEEELEE) are enriched in acidic residues. The segment covering 1417–1455 (SNSTTNEELEESNSTTNEELEESNSTTNEELEESNSTTN) has biased composition (low complexity). The Autotransporter domain occupies 1533 to 1812 (ETSINRGVWI…QGLIKLKVNL (280 aa)).

It localises to the cell outer membrane. The chain is Putative surface cell antigen sca2 (sca2) from Rickettsia sibirica (strain ATCC VR-151 / 246).